The primary structure comprises 247 residues: Capsid protein (247 aa).

The Bipartite nuclear localization signal motif lies at 1-28 (MSGALKRKRSDEVAWSRRRPVKKPVRRA). Residues 1-39 (MSGALKRKRSDEVAWSRRRPVKKPVRRAPPPRAGPSVRR) are disordered. The span at 16-26 (SRRRPVKKPVR) shows a compositional bias: basic residues.

The protein belongs to the geminiviridae capsid protein family. Homomultimer. Interacts with the movement protein. Binds to single-stranded and double-stranded viral DNA.

The protein resides in the virion. It localises to the host nucleus. Its function is as follows. Encapsidates the viral genome into characteristic twinned ('geminate') particles. Binds the genomic viral ssDNA and shuttles it into and out of the cell nucleus. Plays a role in protection of the genome from degradation, virus acquisition and transmission by insect vectors, infectivity, and systemic movement. The CP of monopartite geminiviruses is absolutely essential for virus movement. This is Capsid protein from Megathyrsus maximus (PanSV).